The following is a 1468-amino-acid chain: Potassium channel K2 (1468 aa).

Helical transmembrane passes span 48-68, 146-165, 185-209, 221-240, 246-264, and 285-306; these read MIYIGIGILLKIILIIIYWIY, FNCYFCNTRDILYAIIWYIS, IYIYNILLILLSSSYIDLVMIIISY, LLIDVFFSSPSAFFFSRHFF, IDIYFLMGFLRIIKVFLNV, and IILGVLLLCNAFASTLYTIQGI. The pore-forming intramembrane region spans 326 to 344; that stretch reads YFYFSIISISTVGYGDIIP. The chain crosses the membrane as a helical span at residues 351-368; the sequence is VICIFFIFWTFIWVPIQF. The tract at residues 804 to 823 is disordered; sequence TCARTNESHKNNRLRSRRSQ. Residues 814 to 823 show a composition bias toward basic residues; sequence NNRLRSRRSQ. The stretch at 1141–1185 forms a coiled coil; that stretch reads KSNKNSNNNNKCEQIKQLNNNLTFKKNEKKTKSNKQNTNDTLERR.

It localises to the membrane. May be involved in transmembrane potassium transport at the subcellular level not affecting bulk potassium transport across the plasma membrane. This chain is Potassium channel K2, found in Plasmodium berghei (strain Anka).